Reading from the N-terminus, the 364-residue chain is tRNA/tmRNA (uracil-C(5))-methyltransferase (364 aa).

S-adenosyl-L-methionine is bound by residues Gln186, Tyr214, Asn219, Glu235, and Asp295. Cys320 functions as the Nucleophile in the catalytic mechanism. The Proton acceptor role is filled by Glu354.

The protein belongs to the class I-like SAM-binding methyltransferase superfamily. RNA M5U methyltransferase family. TrmA subfamily.

It carries out the reaction uridine(54) in tRNA + S-adenosyl-L-methionine = 5-methyluridine(54) in tRNA + S-adenosyl-L-homocysteine + H(+). The enzyme catalyses uridine(341) in tmRNA + S-adenosyl-L-methionine = 5-methyluridine(341) in tmRNA + S-adenosyl-L-homocysteine + H(+). Functionally, dual-specificity methyltransferase that catalyzes the formation of 5-methyluridine at position 54 (m5U54) in all tRNAs, and that of position 341 (m5U341) in tmRNA (transfer-mRNA). The sequence is that of tRNA/tmRNA (uracil-C(5))-methyltransferase from Azoarcus sp. (strain BH72).